Here is a 374-residue protein sequence, read N- to C-terminus: Anhydro-N-acetylmuramic acid kinase (374 aa).

12–19 is a binding site for ATP; that stretch reads GTSLDGVD.

Belongs to the anhydro-N-acetylmuramic acid kinase family.

The catalysed reaction is 1,6-anhydro-N-acetyl-beta-muramate + ATP + H2O = N-acetyl-D-muramate 6-phosphate + ADP + H(+). It participates in amino-sugar metabolism; 1,6-anhydro-N-acetylmuramate degradation. The protein operates within cell wall biogenesis; peptidoglycan recycling. Its function is as follows. Catalyzes the specific phosphorylation of 1,6-anhydro-N-acetylmuramic acid (anhMurNAc) with the simultaneous cleavage of the 1,6-anhydro ring, generating MurNAc-6-P. Is required for the utilization of anhMurNAc either imported from the medium or derived from its own cell wall murein, and thus plays a role in cell wall recycling. The polypeptide is Anhydro-N-acetylmuramic acid kinase (Escherichia fergusonii (strain ATCC 35469 / DSM 13698 / CCUG 18766 / IAM 14443 / JCM 21226 / LMG 7866 / NBRC 102419 / NCTC 12128 / CDC 0568-73)).